Consider the following 422-residue polypeptide: MHIHKIQAREILDSRGNPTIEADVTLTTGIIGRASVPSGASTGSREACELRDNDPKRYAGKGVQKAVKHVNNEINQALQGLSVEDQENLDRILCQLDNTENKSHLGANAILATSLACARARALSLNQPLYMTLNQGDMMTMPVPMMNILNGGAHADNNVDIQEFMIMPIGAPDFPVALQMGTEIFHVLKSVLKKQGLNTAVGDEGGFAPNIQSNRQALDLLSEAIEKAGFRLGEDIVFALDVAASELFNEGFYHMYSENQKFDSHQLIEYYANLISSYPIVSIEDGLDEKDWSGWKQLTTHLGNKVQLVGDDLFVTNPKILREGIAQGIANAILIKVNQIGTLSETRQAIKLAYDNGYRCVMSHRSGETEDTFIADLAVASGCGQIKTGSLCRTDRTAKYNQLLRINELASLPYAGKNILKR.

A Mg(2+)-binding site is contributed by serine 41. Position 163 (glutamate 163) interacts with (2R)-2-phosphoglycerate. Glutamate 204 functions as the Proton donor in the catalytic mechanism. Mg(2+) contacts are provided by aspartate 241, glutamate 284, and aspartate 311. The active-site Proton acceptor is lysine 336. Residues arginine 365, serine 366, and lysine 387 each contribute to the (2R)-2-phosphoglycerate site.

This sequence belongs to the enolase family. In terms of assembly, homodimer. Component of the RNA degradosome, a multiprotein complex involved in RNA processing and mRNA degradation. It depends on Mg(2+) as a cofactor.

The protein resides in the cytoplasm. It is found in the secreted. It localises to the cell surface. It carries out the reaction (2R)-2-phosphoglycerate = phosphoenolpyruvate + H2O. It functions in the pathway carbohydrate degradation; glycolysis; pyruvate from D-glyceraldehyde 3-phosphate: step 4/5. Functionally, catalyzes the reversible conversion of 2-phosphoglycerate (2-PG) into phosphoenolpyruvate (PEP). It is essential for the degradation of carbohydrates via glycolysis. The chain is Enolase from Legionella pneumophila subsp. pneumophila (strain Philadelphia 1 / ATCC 33152 / DSM 7513).